The chain runs to 155 residues: 6,7-dimethyl-8-ribityllumazine synthase (155 aa).

5-amino-6-(D-ribitylamino)uracil is bound by residues Phe-23, 57-59, and 81-83; these read AYE and AVI. 86–87 contributes to the (2S)-2-hydroxy-3-oxobutyl phosphate binding site; the sequence is AT. The Proton donor role is filled by His-89. Phe-114 is a 5-amino-6-(D-ribitylamino)uracil binding site. Arg-128 is a binding site for (2S)-2-hydroxy-3-oxobutyl phosphate.

Belongs to the DMRL synthase family.

It catalyses the reaction (2S)-2-hydroxy-3-oxobutyl phosphate + 5-amino-6-(D-ribitylamino)uracil = 6,7-dimethyl-8-(1-D-ribityl)lumazine + phosphate + 2 H2O + H(+). Its pathway is cofactor biosynthesis; riboflavin biosynthesis; riboflavin from 2-hydroxy-3-oxobutyl phosphate and 5-amino-6-(D-ribitylamino)uracil: step 1/2. Functionally, catalyzes the formation of 6,7-dimethyl-8-ribityllumazine by condensation of 5-amino-6-(D-ribitylamino)uracil with 3,4-dihydroxy-2-butanone 4-phosphate. This is the penultimate step in the biosynthesis of riboflavin. In Desulfotalea psychrophila (strain LSv54 / DSM 12343), this protein is 6,7-dimethyl-8-ribityllumazine synthase.